The chain runs to 418 residues: MNQKQQKPTLSGQRFKTRKRDEKERFDPTQFQDCIIQGLTETGTDLEAVAKFLDASGAKLDYRRYAETLFDILVAGGMLAPGGTLADDMTRTDVCVFAAQEDLETMQAFAQVFNKLIRRYKYLEKGFEDEVKKLLLFLKGFSESERNKLAMLTGILLANGTLNASILNSLYNENLVKEGVSAAFAVKLFKSWINEKDINAVAVSLRKVNMDNRLMELFPANKQSVEHFSKYFTEAGLKELSEYVRNQQTIGARKELQKELQEQMSRGDPFKDIILYVKEEMKKNNISEQTVIAIIWSSVMSTVEWNKKEELVAEQAIKHLKQYSPLLAAFTTQGQSELTLLLKIQEYCYDNIHFMKAFQKIVVLFYKAEVLSEEPILKWYKDAHLAKGKSVFLEQMKKFVEWLKNAEEESESEAEEGD.

Positions 1 to 14 (MNQKQQKPTLSGQR) are enriched in polar residues. The interval 1–25 (MNQKQQKPTLSGQRFKTRKRDEKER) is disordered. The W2 domain maps to 246–413 (NQQTIGARKE…KNAEEESESE (168 aa)).

The protein belongs to the BZW family.

Its function is as follows. Translation initiation regulator which may repress repeat-associated non-AUG (RAN) initiated translation probably by acting as a competitive inhibitor of eukaryotic translation initiation factor 5 (EIF5) function. Enhances histone H4 gene transcription but does not seem to bind DNA directly. The sequence is that of eIF5-mimic protein 2 (BZW1) from Gallus gallus (Chicken).